A 103-amino-acid chain; its full sequence is Stefin-3 (103 aa).

The short motif at Q52 to G56 is the Secondary area of contact element.

The protein belongs to the cystatin family.

It is found in the cytoplasm. Its function is as follows. This is an intracellular thiol proteinase inhibitor. This chain is Stefin-3 (Stfa3), found in Mus musculus (Mouse).